The chain runs to 524 residues: 2-isopropylmalate synthase (524 aa).

The Pyruvate carboxyltransferase domain maps to Val-15 to His-275. 4 residues coordinate Mn(2+): Asp-24, His-212, His-214, and Asn-248. A regulatory domain region spans residues Arg-401–Phe-524.

It belongs to the alpha-IPM synthase/homocitrate synthase family. LeuA type 1 subfamily. In terms of assembly, homodimer. Requires Mn(2+) as cofactor.

It localises to the cytoplasm. It carries out the reaction 3-methyl-2-oxobutanoate + acetyl-CoA + H2O = (2S)-2-isopropylmalate + CoA + H(+). It participates in amino-acid biosynthesis; L-leucine biosynthesis; L-leucine from 3-methyl-2-oxobutanoate: step 1/4. In terms of biological role, catalyzes the condensation of the acetyl group of acetyl-CoA with 3-methyl-2-oxobutanoate (2-ketoisovalerate) to form 3-carboxy-3-hydroxy-4-methylpentanoate (2-isopropylmalate). This chain is 2-isopropylmalate synthase, found in Caulobacter vibrioides (strain ATCC 19089 / CIP 103742 / CB 15) (Caulobacter crescentus).